A 130-amino-acid chain; its full sequence is Small ribosomal subunit protein uS9 (130 aa).

This sequence belongs to the universal ribosomal protein uS9 family.

This Bordetella avium (strain 197N) protein is Small ribosomal subunit protein uS9.